The chain runs to 320 residues: Malate dehydrogenase (320 aa).

Residues 10–15 (GSGMIG) and Asp-34 contribute to the NAD(+) site. Substrate is bound by residues Arg-83 and Arg-89. Residues Asn-96 and 119-121 (ITN) each bind NAD(+). Asn-121 and Arg-152 together coordinate substrate. His-176 acts as the Proton acceptor in catalysis.

Belongs to the LDH/MDH superfamily. MDH type 3 family.

It carries out the reaction (S)-malate + NAD(+) = oxaloacetate + NADH + H(+). In terms of biological role, catalyzes the reversible oxidation of malate to oxaloacetate. This Hyphomonas neptunium (strain ATCC 15444) protein is Malate dehydrogenase.